The following is an 859-amino-acid chain: Leucine--tRNA ligase (859 aa).

Residues 42–52 (PYPSGRLHMGH) carry the 'HIGH' region motif. The 'KMSKS' region signature appears at 618-622 (KMSKS). K621 lines the ATP pocket.

This sequence belongs to the class-I aminoacyl-tRNA synthetase family.

The protein resides in the cytoplasm. The enzyme catalyses tRNA(Leu) + L-leucine + ATP = L-leucyl-tRNA(Leu) + AMP + diphosphate. This is Leucine--tRNA ligase from Shewanella sp. (strain MR-4).